A 106-amino-acid polypeptide reads, in one-letter code: Guanyl-specific ribonuclease Th1 (106 aa).

2 cysteine pairs are disulfide-bonded: Cys-5–Cys-103 and Cys-23–Cys-84. His-39 is a catalytic residue. Catalysis depends on Glu-58, which acts as the Proton acceptor. His-92 serves as the catalytic Proton donor.

Belongs to the ribonuclease N1/T1 family.

The enzyme catalyses [RNA] containing guanosine + H2O = an [RNA fragment]-3'-guanosine-3'-phosphate + a 5'-hydroxy-ribonucleotide-3'-[RNA fragment].. The protein is Guanyl-specific ribonuclease Th1 of Trichoderma harzianum (Hypocrea lixii).